A 449-amino-acid chain; its full sequence is Probable aminotransferase TAT1 (449 aa).

The span at 1–12 (MNHNSNLVLPSH) shows a compositional bias: polar residues. Positions 1 to 20 (MNHNSNLVLPSHQTETQTQD) are disordered.

The protein belongs to the class-I pyridoxal-phosphate-dependent aminotransferase family. It depends on pyridoxal 5'-phosphate as a cofactor.

The chain is Probable aminotransferase TAT1 from Arabidopsis thaliana (Mouse-ear cress).